The following is a 388-amino-acid chain: N-acetylneuraminate epimerase (388 aa).

The N-terminal stretch at 1 to 26 (MFSLIRAKRLAIGIAALAWSTGAVMA) is a signal peptide. Kelch repeat units lie at residues 48–92 (MAYV…AAAG), 94–147 (KIFA…VGLA), 149–186 (GRIA…KLVD), 187–232 (SYMG…ATMG), 236–285 (FLLV…VAGA), 307–356 (ANAA…DAPG), and 358–387 (LLVV…LSVE). Residue Glu242 is the Proton acceptor of the active site.

Belongs to the NanM family. Homodimer.

The protein resides in the periplasm. The catalysed reaction is N-acetyl-alpha-neuraminate = N-acetyl-beta-neuraminate. Converts alpha-N-acetylneuranimic acid (Neu5Ac) to the beta-anomer, accelerating the equilibrium between the alpha- and beta-anomers. Probably facilitates sialidase-negative bacteria to compete successfully for limited amounts of extracellular Neu5Ac, which is likely taken up in the beta-anomer. In addition, the rapid removal of sialic acid from solution might be advantageous to the bacterium to damp down host responses. The chain is N-acetylneuraminate epimerase from Brucella melitensis biotype 1 (strain ATCC 23456 / CCUG 17765 / NCTC 10094 / 16M).